Consider the following 530-residue polypeptide: Bifunctional purine biosynthesis protein PurH (530 aa).

The 148-residue stretch at 1–148 (MNNPRPIRRA…KNHKDVTIVV (148 aa)) folds into the MGS-like domain.

Belongs to the PurH family.

The enzyme catalyses (6R)-10-formyltetrahydrofolate + 5-amino-1-(5-phospho-beta-D-ribosyl)imidazole-4-carboxamide = 5-formamido-1-(5-phospho-D-ribosyl)imidazole-4-carboxamide + (6S)-5,6,7,8-tetrahydrofolate. It catalyses the reaction IMP + H2O = 5-formamido-1-(5-phospho-D-ribosyl)imidazole-4-carboxamide. It functions in the pathway purine metabolism; IMP biosynthesis via de novo pathway; 5-formamido-1-(5-phospho-D-ribosyl)imidazole-4-carboxamide from 5-amino-1-(5-phospho-D-ribosyl)imidazole-4-carboxamide (10-formyl THF route): step 1/1. The protein operates within purine metabolism; IMP biosynthesis via de novo pathway; IMP from 5-formamido-1-(5-phospho-D-ribosyl)imidazole-4-carboxamide: step 1/1. The chain is Bifunctional purine biosynthesis protein PurH from Aliivibrio salmonicida (strain LFI1238) (Vibrio salmonicida (strain LFI1238)).